A 386-amino-acid polypeptide reads, in one-letter code: D(1)-like dopamine receptor (386 aa).

Polar residues predominate over residues methionine 1–threonine 10. The interval methionine 1–arginine 28 is disordered. Topologically, residues methionine 1–arginine 35 are extracellular. A helical transmembrane segment spans residues alanine 36–valine 56. The Cytoplasmic segment spans residues cysteine 57–asparagine 72. Residues alanine 73–tryptophan 92 form a helical membrane-spanning segment. Topologically, residues arginine 93–aspartate 109 are extracellular. The cysteines at positions 108 and 188 are disulfide-linked. Residues threonine 110–methionine 131 form a helical membrane-spanning segment. The Cytoplasmic portion of the chain corresponds to aspartate 132 to arginine 150. The helical transmembrane segment at phenylalanine 151–tryptophan 175 threads the bilayer. The Extracellular segment spans residues histidine 176–threonine 195. 2 N-linked (GlcNAc...) asparagine glycosylation sites follow: asparagine 189 and asparagine 193. Residues tyrosine 196 to phenylalanine 220 form a helical membrane-spanning segment. Residues arginine 221–threonine 266 are Cytoplasmic-facing. The helical transmembrane segment at leucine 267–arginine 292 threads the bilayer. Residues leucine 293–threonine 305 are Extracellular-facing. Residues phenylalanine 306–alanine 325 form a helical membrane-spanning segment. Residues phenylalanine 326–leucine 386 lie on the Cytoplasmic side of the membrane.

It belongs to the G-protein coupled receptor 1 family.

It localises to the cell membrane. Its subcellular location is the cell projection. The protein localises to the cilium membrane. This is one of the five types (D1 to D5) of receptors for dopamine. The activity of this receptor is mediated by G proteins which activate adenylyl cyclase. The polypeptide is D(1)-like dopamine receptor (Oreochromis mossambicus (Mozambique tilapia)).